The primary structure comprises 215 residues: HTH-type transcriptional repressor FabR (215 aa).

The region spanning 10-70 (KTRRSLVEAA…TMVDESGLML (61 aa)) is the HTH tetR-type domain. The segment at residues 33 to 52 (SLREVAREAVIAPTSFYRHF) is a DNA-binding region (H-T-H motif).

In terms of assembly, homodimer.

It localises to the cytoplasm. In terms of biological role, represses the transcription of fabB, involved in unsaturated fatty acid (UFA) biosynthesis. By controlling UFA production, FabR directly influences the physical properties of the membrane bilayer. This is HTH-type transcriptional repressor FabR from Escherichia coli (strain K12 / MC4100 / BW2952).